The chain runs to 204 residues: V-set and transmembrane domain-containing protein 2-like protein (204 aa).

The first 24 residues, 1–24 (MGAPLAVALGALHYLALFLQLGGA), serve as a signal peptide directing secretion. The Ig-like domain maps to 41–158 (ALFTETPHDM…DGKARHHKVK (118 aa)). Cys62 and Cys142 are joined by a disulfide. The disordered stretch occupies residues 168-204 (NSVLHLPEAPPAAPAPPPPKPGKELRKRSVDQEACSL). The span at 175 to 187 (EAPPAAPAPPPPK) shows a compositional bias: pro residues. Basic and acidic residues predominate over residues 188–198 (PGKELRKRSVD).

This Homo sapiens (Human) protein is V-set and transmembrane domain-containing protein 2-like protein (VSTM2L).